The chain runs to 467 residues: Protein CitXG (467 aa).

The interval 1–178 is apo-citrate lyase phosphoribosyl-dephospho-CoA transferase; it reads MDYFEGGERL…NKMLHNFEKS (178 aa). The segment at 179–467 is 2-(5''-triphosphoribosyl)-3'-dephosphocoenzyme-A synthase; it reads KMIVPQMTQS…IFLARLVGSL (289 aa).

The protein in the N-terminal section; belongs to the CitX family. In the C-terminal section; belongs to the CitG/MdcB family.

The enzyme catalyses apo-[citrate lyase ACP] + 2'-(5''-triphospho-alpha-D-ribosyl)-3'-dephospho-CoA = holo-[citrate lyase ACP] + diphosphate. The catalysed reaction is 3'-dephospho-CoA + ATP = 2'-(5''-triphospho-alpha-D-ribosyl)-3'-dephospho-CoA + adenine. In terms of biological role, bifunctional enzyme that catalyzes formation of 2-(5''-triphosphoribosyl)-3'-dephosphocoenzyme-A, and then the transfer of this prosthetic group precursor to the apo-acyl carrier protein (gamma chain) of the citrate lyase to yield the holo-acyl carrier protein. The sequence is that of Protein CitXG (citXG) from Leuconostoc mesenteroides subsp. cremoris.